A 350-amino-acid chain; its full sequence is Arginine N-succinyltransferase (350 aa).

L125 contacts succinyl-CoA. Residue H229 is the Proton donor of the active site.

It belongs to the arginine N-succinyltransferase family.

It catalyses the reaction succinyl-CoA + L-arginine = N(2)-succinyl-L-arginine + CoA + H(+). Its pathway is amino-acid degradation; L-arginine degradation via AST pathway; L-glutamate and succinate from L-arginine: step 1/5. Its function is as follows. Catalyzes the transfer of succinyl-CoA to arginine to produce N(2)-succinylarginine. In Yersinia pestis, this protein is Arginine N-succinyltransferase.